The sequence spans 37 residues: Large ribosomal subunit protein bL36 (37 aa).

It belongs to the bacterial ribosomal protein bL36 family.

In Shewanella baltica (strain OS223), this protein is Large ribosomal subunit protein bL36.